The following is a 213-amino-acid chain: Putative thiamine-phosphate synthase (213 aa).

Residues 38–42 and Asn-70 contribute to the 4-amino-2-methyl-5-(diphosphooxymethyl)pyrimidine site; that span reads QLREK. Asp-71 contributes to the Mg(2+) binding site. 4-amino-2-methyl-5-(diphosphooxymethyl)pyrimidine is bound at residue Ser-109. 135–137 serves as a coordination point for 2-[(2R,5Z)-2-carboxy-4-methylthiazol-5(2H)-ylidene]ethyl phosphate; that stretch reads TPS. Residue Lys-138 participates in 4-amino-2-methyl-5-(diphosphooxymethyl)pyrimidine binding. 2-[(2R,5Z)-2-carboxy-4-methylthiazol-5(2H)-ylidene]ethyl phosphate contacts are provided by residues Gly-166 and 186-187; that span reads IS.

This sequence belongs to the thiamine-phosphate synthase family. The cofactor is Mg(2+).

It catalyses the reaction 2-[(2R,5Z)-2-carboxy-4-methylthiazol-5(2H)-ylidene]ethyl phosphate + 4-amino-2-methyl-5-(diphosphooxymethyl)pyrimidine + 2 H(+) = thiamine phosphate + CO2 + diphosphate. It carries out the reaction 2-(2-carboxy-4-methylthiazol-5-yl)ethyl phosphate + 4-amino-2-methyl-5-(diphosphooxymethyl)pyrimidine + 2 H(+) = thiamine phosphate + CO2 + diphosphate. The enzyme catalyses 4-methyl-5-(2-phosphooxyethyl)-thiazole + 4-amino-2-methyl-5-(diphosphooxymethyl)pyrimidine + H(+) = thiamine phosphate + diphosphate. The protein operates within cofactor biosynthesis; thiamine diphosphate biosynthesis; thiamine phosphate from 4-amino-2-methyl-5-diphosphomethylpyrimidine and 4-methyl-5-(2-phosphoethyl)-thiazole: step 1/1. Functionally, condenses 4-methyl-5-(beta-hydroxyethyl)thiazole monophosphate (THZ-P) and 2-methyl-4-amino-5-hydroxymethyl pyrimidine pyrophosphate (HMP-PP) to form thiamine monophosphate (TMP). The polypeptide is Putative thiamine-phosphate synthase (thiE) (Geobacter sulfurreducens (strain ATCC 51573 / DSM 12127 / PCA)).